The sequence spans 471 residues: MKHIVKNIHFVGIGGAGMSGIAEVLLNLGYKVSGSDVGSNAATRRLASLGARVAHGHDAENVTGANAVVVSTAVTNDNPEVLAARARRIPVVPRAVMLAELMRLKQGVAIAGTHGKTTTTSLVASVLAEGGLDPTFVIGGRLNSAGANARLGTGDFIVAEADESDASFLNLFPVMEVITNIDADHMDTYGHDFARLKQAFVEFTQRLPFYGIAVLCVDDPNVREILPFVSKPVVRYGFAEDAQIRAVNARAVDGQMHFTVLRQLNGHAEPPLDIVLNLPGIHNVQNALAAIAIATELEVPDASIVKALREFHGVGRRFQRYGEVATPDGSGTFTLVDDYGHHPVEMAATLAAARGAFPDRRLVLAFQPHRFTRTRDCFEDFVKVLGTVDALLLAEVYAAGESPIVAADGRALTRALRVANKVEPVFVEQIEDMPQAILNAVRPGDVVVTMGAGSIGAVPGQLVSHQQGGQQ.

112-118 (GTHGKTT) provides a ligand contact to ATP.

It belongs to the MurCDEF family.

It is found in the cytoplasm. The enzyme catalyses UDP-N-acetyl-alpha-D-muramate + L-alanine + ATP = UDP-N-acetyl-alpha-D-muramoyl-L-alanine + ADP + phosphate + H(+). It functions in the pathway cell wall biogenesis; peptidoglycan biosynthesis. Its function is as follows. Cell wall formation. This Cupriavidus metallidurans (strain ATCC 43123 / DSM 2839 / NBRC 102507 / CH34) (Ralstonia metallidurans) protein is UDP-N-acetylmuramate--L-alanine ligase.